A 529-amino-acid polypeptide reads, in one-letter code: Nuclear protein localization protein 4 homolog 1 (529 aa).

One can recognise an MPN domain in the interval 129–266 (IQIENQELVN…ITEYSMDRHY (138 aa)). Residues 499-529 (SGGAVWNCGHCTFQNEAARQDCSMCGLPAAD) form a RanBP2-type zinc finger.

This sequence belongs to the NPL4 family. As to quaternary structure, forms a complex composed of ubxn-3, ufd-1, npl-4.1 and cdc-48.1; within the complex, interacts with ufd-1 and ubxn-3. Interacts with ufd-1. Interacts with elc-1/elongin C; the interaction may mediate the interaction between the npl-4-ufd-1-cdc-48 complex and the E3 ubiquitin ligase cul-2 complex.

The protein localises to the cytoplasm. It is found in the nucleus. In association with ufd-1 and ATPase cdc-48.1 and/or cdc-48.2, involved in the cytoplasmic elimination of misfolded proteins exported from the ER. This pathway, known as ERAD, prevents the activation of the unfolded protein response (UPR) caused by the accumulation of misfolded proteins in the ER. During S phase and in association with ufd-1, cdc-48.1 and/or cdc-48.2 and ubxn-3, ensures the degradation of DNA licensing factor cdt-1 after the initiation of DNA replication and thus the disassembly of the DNA replication CGM helicase complex by promoting the dissociation from chromatin of several of its components including cdc-45 and sld-5. Regulates ubxn-3 nuclear localization during S phase. This chain is Nuclear protein localization protein 4 homolog 1, found in Caenorhabditis elegans.